Consider the following 314-residue polypeptide: Methionyl-tRNA formyltransferase (314 aa).

111–114 (SLLP) is a (6S)-5,6,7,8-tetrahydrofolate binding site.

Belongs to the Fmt family.

The catalysed reaction is L-methionyl-tRNA(fMet) + (6R)-10-formyltetrahydrofolate = N-formyl-L-methionyl-tRNA(fMet) + (6S)-5,6,7,8-tetrahydrofolate + H(+). Functionally, attaches a formyl group to the free amino group of methionyl-tRNA(fMet). The formyl group appears to play a dual role in the initiator identity of N-formylmethionyl-tRNA by promoting its recognition by IF2 and preventing the misappropriation of this tRNA by the elongation apparatus. The protein is Methionyl-tRNA formyltransferase of Coxiella burnetii (strain CbuK_Q154) (Coxiella burnetii (strain Q154)).